We begin with the raw amino-acid sequence, 327 residues long: Thiamine-monophosphate kinase (327 aa).

Positions 30, 45, 46, and 47 each coordinate Mg(2+). Residue His-54 coordinates substrate. Asp-76 lines the Mg(2+) pocket. ATP is bound by residues Tyr-106, 123-124 (GD), and Arg-149. Asp-124 provides a ligand contact to Mg(2+). Asp-221 provides a ligand contact to Mg(2+). Ser-223 serves as a coordination point for ATP. Residue Asp-224 coordinates Mg(2+). Substrate contacts are provided by Glu-268 and Phe-321.

This sequence belongs to the thiamine-monophosphate kinase family.

The enzyme catalyses thiamine phosphate + ATP = thiamine diphosphate + ADP. Its pathway is cofactor biosynthesis; thiamine diphosphate biosynthesis; thiamine diphosphate from thiamine phosphate: step 1/1. Its function is as follows. Catalyzes the ATP-dependent phosphorylation of thiamine-monophosphate (TMP) to form thiamine-pyrophosphate (TPP), the active form of vitamin B1. This chain is Thiamine-monophosphate kinase, found in Synechococcus elongatus (strain ATCC 33912 / PCC 7942 / FACHB-805) (Anacystis nidulans R2).